The sequence spans 102 residues: Small ribosomal subunit protein uS10 (102 aa).

Belongs to the universal ribosomal protein uS10 family. In terms of assembly, part of the 30S ribosomal subunit.

Involved in the binding of tRNA to the ribosomes. The protein is Small ribosomal subunit protein uS10 of Methanosarcina mazei (strain ATCC BAA-159 / DSM 3647 / Goe1 / Go1 / JCM 11833 / OCM 88) (Methanosarcina frisia).